A 312-amino-acid chain; its full sequence is Formate dehydrogenase iron-sulfur subunit (312 aa).

4Fe-4S ferredoxin-type domains follow at residues 35–65 (IAKL…SDIN), 97–129 (LEWL…QYAN), 130–159 (GIVD…MNPE), and 164–195 (YKCT…FGSK). Positions 44, 47, 50, 54, 106, 109, 114, 118, 139, 142, 145, 149, 166, 169, 181, and 185 each coordinate [4Fe-4S] cluster.

In terms of assembly, formate dehydrogenase is a membrane-bound complex, formed by subunits alpha, beta and gamma. The cofactor is [4Fe-4S] cluster.

Its subcellular location is the cell membrane. In terms of biological role, allows to use formate as major electron donor during aerobic respiration. The beta chain is an electron transfer unit containing 4 cysteine clusters involved in the formation of iron-sulfur centers. Electrons are transferred from the gamma chain to the molybdenum cofactor of the alpha subunit. The polypeptide is Formate dehydrogenase iron-sulfur subunit (fdxH) (Haemophilus influenzae (strain ATCC 51907 / DSM 11121 / KW20 / Rd)).